The chain runs to 216 residues: Probable chemoreceptor glutamine deamidase CheD (216 aa).

Belongs to the CheD family.

The catalysed reaction is L-glutaminyl-[protein] + H2O = L-glutamyl-[protein] + NH4(+). Functionally, probably deamidates glutamine residues to glutamate on methyl-accepting chemotaxis receptors (MCPs), playing an important role in chemotaxis. This is Probable chemoreceptor glutamine deamidase CheD from Halorhodospira halophila (strain DSM 244 / SL1) (Ectothiorhodospira halophila (strain DSM 244 / SL1)).